The primary structure comprises 150 residues: MQVILLDKVVNLGGLGDIVKVKDGYARNFLIPTGAARRATASAKAEFEAKRVELEKQAAEKLAAAQQLGEKLNGVNVKLTQKAGVDGRLFGSVTNADIAEELTKAGFAVAKSQVRLVNGPIKTVGDATVVVALHTDVSVEVTVSVYGDHS.

The protein belongs to the bacterial ribosomal protein bL9 family.

In terms of biological role, binds to the 23S rRNA. This Delftia acidovorans (strain DSM 14801 / SPH-1) protein is Large ribosomal subunit protein bL9.